Consider the following 316-residue polypeptide: MQIRLANPRGFCAGVDRAIEIVNRALDVFGAPIYVRHEVVHNKFVVDNLRNRGAIFVDELGEVPDDKLVIFSAHGVSQAVQNEAARRGLKVFDATCPLVTKVHMEVMRYSRDGRECILIGHHGHPEVEGTMGQYDHSNGGDIYLVEDEADVQKLEVKDPSRLSFVTQTTLSMDDTARVIDALRAKFPQIEGPRKDDICYATQNRQDAVKQLAGDCDIMLVVGSPNSSNSNRLRELAERMGTPAYLIDEAAQIDPAWLYGKKAIGVTAGASAPEVLVADVIKRLKALGGEEPVEVSGREESIVFSMPKELRIDAVEL.

C12 serves as a coordination point for [4Fe-4S] cluster. (2E)-4-hydroxy-3-methylbut-2-enyl diphosphate contacts are provided by H41 and H74. 2 residues coordinate dimethylallyl diphosphate: H41 and H74. The isopentenyl diphosphate site is built by H41 and H74. C96 is a [4Fe-4S] cluster binding site. H124 lines the (2E)-4-hydroxy-3-methylbut-2-enyl diphosphate pocket. H124 serves as a coordination point for dimethylallyl diphosphate. Residue H124 coordinates isopentenyl diphosphate. E126 serves as the catalytic Proton donor. T168 lines the (2E)-4-hydroxy-3-methylbut-2-enyl diphosphate pocket. Residue C198 participates in [4Fe-4S] cluster binding. (2E)-4-hydroxy-3-methylbut-2-enyl diphosphate is bound by residues S226, S227, N228, and S270. Positions 226, 227, 228, and 270 each coordinate dimethylallyl diphosphate. Isopentenyl diphosphate contacts are provided by S226, S227, N228, and S270.

This sequence belongs to the IspH family. It depends on [4Fe-4S] cluster as a cofactor.

It carries out the reaction isopentenyl diphosphate + 2 oxidized [2Fe-2S]-[ferredoxin] + H2O = (2E)-4-hydroxy-3-methylbut-2-enyl diphosphate + 2 reduced [2Fe-2S]-[ferredoxin] + 2 H(+). The catalysed reaction is dimethylallyl diphosphate + 2 oxidized [2Fe-2S]-[ferredoxin] + H2O = (2E)-4-hydroxy-3-methylbut-2-enyl diphosphate + 2 reduced [2Fe-2S]-[ferredoxin] + 2 H(+). The protein operates within isoprenoid biosynthesis; dimethylallyl diphosphate biosynthesis; dimethylallyl diphosphate from (2E)-4-hydroxy-3-methylbutenyl diphosphate: step 1/1. It functions in the pathway isoprenoid biosynthesis; isopentenyl diphosphate biosynthesis via DXP pathway; isopentenyl diphosphate from 1-deoxy-D-xylulose 5-phosphate: step 6/6. In terms of biological role, catalyzes the conversion of 1-hydroxy-2-methyl-2-(E)-butenyl 4-diphosphate (HMBPP) into a mixture of isopentenyl diphosphate (IPP) and dimethylallyl diphosphate (DMAPP). Acts in the terminal step of the DOXP/MEP pathway for isoprenoid precursor biosynthesis. This chain is 4-hydroxy-3-methylbut-2-enyl diphosphate reductase, found in Marinobacter nauticus (strain ATCC 700491 / DSM 11845 / VT8) (Marinobacter aquaeolei).